The primary structure comprises 352 residues: Fe(3+) ions import ATP-binding protein FbpC (352 aa).

An ABC transporter domain is found at 5–239 (LHIGHLSKSF…PADLDAALFI (235 aa)). Residue 37-44 (GASGCGKT) participates in ATP binding.

Belongs to the ABC transporter superfamily. Fe(3+) ion importer (TC 3.A.1.10) family. The complex is composed of two ATP-binding proteins (FbpC), two transmembrane proteins (FbpB) and a solute-binding protein (FbpA).

Its subcellular location is the cell inner membrane. The enzyme catalyses Fe(3+)(out) + ATP + H2O = Fe(3+)(in) + ADP + phosphate + H(+). Part of the ABC transporter complex FbpABC involved in Fe(3+) ions import. Responsible for energy coupling to the transport system. This chain is Fe(3+) ions import ATP-binding protein FbpC, found in Neisseria gonorrhoeae (strain ATCC 700825 / FA 1090).